A 599-amino-acid chain; its full sequence is Elongation factor 4 (599 aa).

Residues 4-186 form the tr-type G domain; sequence KFIRNFSIIA…AIIKHVPPPL (183 aa). Residues 16-21 and 133-136 each bind GTP; these read DHGKST and NKID.

Belongs to the TRAFAC class translation factor GTPase superfamily. Classic translation factor GTPase family. LepA subfamily.

It is found in the cell membrane. The catalysed reaction is GTP + H2O = GDP + phosphate + H(+). Required for accurate and efficient protein synthesis under certain stress conditions. May act as a fidelity factor of the translation reaction, by catalyzing a one-codon backward translocation of tRNAs on improperly translocated ribosomes. Back-translocation proceeds from a post-translocation (POST) complex to a pre-translocation (PRE) complex, thus giving elongation factor G a second chance to translocate the tRNAs correctly. Binds to ribosomes in a GTP-dependent manner. This Ureaplasma parvum serovar 3 (strain ATCC 27815 / 27 / NCTC 11736) protein is Elongation factor 4.